The sequence spans 777 residues: Subtilisin-like protease SBT3.7 (777 aa).

The signal sequence occupies residues 1-22 (MRNHRTSIFVVLSLVIILNGQS). Residues 23–113 (GFLPRAGAES…VIPDRFYKPA (91 aa)) constitute a propeptide, activation peptide. An Inhibitor I9 domain is found at 34 to 111 (VHIVYLGEKQ…VHVIPDRFYK (78 aa)). Positions 117–624 (TWDYLGLSPT…GGLVNPEKAT (508 aa)) constitute a Peptidase S8 domain. N-linked (GlcNAc...) asparagine glycosylation is present at asparagine 133. Residue aspartate 147 is the Charge relay system of the active site. Asparagine 180 and asparagine 206 each carry an N-linked (GlcNAc...) asparagine glycan. Catalysis depends on histidine 222, which acts as the Charge relay system. Residues asparagine 237, asparagine 397, asparagine 412, and asparagine 540 are each glycosylated (N-linked (GlcNAc...) asparagine). A PA domain is found at 386-481 (SLVYPENPGN…ELGTYILFYI (96 aa)). The active-site Charge relay system is serine 555. Residues asparagine 647, asparagine 723, and asparagine 758 are each glycosylated (N-linked (GlcNAc...) asparagine).

The protein belongs to the peptidase S8 family.

It localises to the secreted. The sequence is that of Subtilisin-like protease SBT3.7 from Arabidopsis thaliana (Mouse-ear cress).